Reading from the N-terminus, the 194-residue chain is Large ribosomal subunit protein bL25B (194 aa).

Belongs to the bacterial ribosomal protein bL25 family. CTC subfamily. Part of the 50S ribosomal subunit; part of the 5S rRNA/L5/L18/L25 subcomplex. Contacts the 5S rRNA. Binds to the 5S rRNA independently of L5 and L18.

Functionally, this is one of the proteins that binds to the 5S RNA in the ribosome where it forms part of the central protuberance. This chain is Large ribosomal subunit protein bL25B, found in Symbiobacterium thermophilum (strain DSM 24528 / JCM 14929 / IAM 14863 / T).